A 255-amino-acid polypeptide reads, in one-letter code: Protein N-terminal and lysine N-methyltransferase efm7 (255 aa).

Residues 1 to 25 (MADNDFEGFGIFEEPEGFRPSTPPP) form a disordered region. S-adenosyl-L-methionine-binding positions include Trp-58, 84-86 (GAG), Asp-106, Trp-137, and Ser-162.

It belongs to the class I-like SAM-binding methyltransferase superfamily. EFM7 family.

The protein resides in the cytoplasm. Its function is as follows. S-adenosyl-L-methionine-dependent protein methyltransferase that trimethylates the N-terminal glycine 'Gly-2' of elongation factor 1-alpha, before also catalyzing the mono- and dimethylation of 'Lys-3'. The polypeptide is Protein N-terminal and lysine N-methyltransferase efm7 (Schizosaccharomyces pombe (strain 972 / ATCC 24843) (Fission yeast)).